A 258-amino-acid polypeptide reads, in one-letter code: Imidazole glycerol phosphate synthase subunit HisF (258 aa).

Residues aspartate 11 and aspartate 130 contribute to the active site.

This sequence belongs to the HisA/HisF family. As to quaternary structure, heterodimer of HisH and HisF.

It is found in the cytoplasm. The enzyme catalyses 5-[(5-phospho-1-deoxy-D-ribulos-1-ylimino)methylamino]-1-(5-phospho-beta-D-ribosyl)imidazole-4-carboxamide + L-glutamine = D-erythro-1-(imidazol-4-yl)glycerol 3-phosphate + 5-amino-1-(5-phospho-beta-D-ribosyl)imidazole-4-carboxamide + L-glutamate + H(+). It participates in amino-acid biosynthesis; L-histidine biosynthesis; L-histidine from 5-phospho-alpha-D-ribose 1-diphosphate: step 5/9. In terms of biological role, IGPS catalyzes the conversion of PRFAR and glutamine to IGP, AICAR and glutamate. The HisF subunit catalyzes the cyclization activity that produces IGP and AICAR from PRFAR using the ammonia provided by the HisH subunit. This Gluconacetobacter diazotrophicus (strain ATCC 49037 / DSM 5601 / CCUG 37298 / CIP 103539 / LMG 7603 / PAl5) protein is Imidazole glycerol phosphate synthase subunit HisF.